The following is a 124-amino-acid chain: Small ribosomal subunit protein uS12c (124 aa).

Belongs to the universal ribosomal protein uS12 family. As to quaternary structure, part of the 30S ribosomal subunit.

The protein resides in the plastid. With S4 and S5 plays an important role in translational accuracy. Located at the interface of the 30S and 50S subunits. This is Small ribosomal subunit protein uS12c (rps12) from Helicosporidium sp. subsp. Simulium jonesii (Green alga).